A 383-amino-acid polypeptide reads, in one-letter code: Erythronate-4-phosphate dehydrogenase (383 aa).

Substrate contacts are provided by S45 and T67. Residue D147 coordinates NAD(+). R208 is a catalytic residue. D232 serves as a coordination point for NAD(+). E237 is an active-site residue. H254 acts as the Proton donor in catalysis. G257 contacts NAD(+). Residue Y258 coordinates substrate.

Belongs to the D-isomer specific 2-hydroxyacid dehydrogenase family. PdxB subfamily. In terms of assembly, homodimer.

The protein localises to the cytoplasm. The catalysed reaction is 4-phospho-D-erythronate + NAD(+) = (R)-3-hydroxy-2-oxo-4-phosphooxybutanoate + NADH + H(+). The protein operates within cofactor biosynthesis; pyridoxine 5'-phosphate biosynthesis; pyridoxine 5'-phosphate from D-erythrose 4-phosphate: step 2/5. Its function is as follows. Catalyzes the oxidation of erythronate-4-phosphate to 3-hydroxy-2-oxo-4-phosphonooxybutanoate. This Psychromonas ingrahamii (strain DSM 17664 / CCUG 51855 / 37) protein is Erythronate-4-phosphate dehydrogenase.